Here is a 91-residue protein sequence, read N- to C-terminus: DNA-directed RNA polymerase subunit omega (91 aa).

The protein belongs to the RNA polymerase subunit omega family. In terms of assembly, the RNAP catalytic core consists of 2 alpha, 1 beta, 1 beta' and 1 omega subunit. When a sigma factor is associated with the core the holoenzyme is formed, which can initiate transcription.

The catalysed reaction is RNA(n) + a ribonucleoside 5'-triphosphate = RNA(n+1) + diphosphate. Its function is as follows. Promotes RNA polymerase assembly. Latches the N- and C-terminal regions of the beta' subunit thereby facilitating its interaction with the beta and alpha subunits. In Enterobacter sp. (strain 638), this protein is DNA-directed RNA polymerase subunit omega.